Consider the following 308-residue polypeptide: 4-hydroxy-3-methylbut-2-enyl diphosphate reductase (308 aa).

Residue Cys-12 coordinates [4Fe-4S] cluster. Residues His-41 and His-74 each contribute to the (2E)-4-hydroxy-3-methylbut-2-enyl diphosphate site. 2 residues coordinate dimethylallyl diphosphate: His-41 and His-74. His-41 and His-74 together coordinate isopentenyl diphosphate. Residue Cys-96 participates in [4Fe-4S] cluster binding. (2E)-4-hydroxy-3-methylbut-2-enyl diphosphate is bound at residue His-124. His-124 contributes to the dimethylallyl diphosphate binding site. Residue His-124 coordinates isopentenyl diphosphate. The Proton donor role is filled by Glu-126. Thr-166 is a binding site for (2E)-4-hydroxy-3-methylbut-2-enyl diphosphate. Cys-196 is a binding site for [4Fe-4S] cluster. Positions 224, 225, 226, and 268 each coordinate (2E)-4-hydroxy-3-methylbut-2-enyl diphosphate. Residues Ser-224, Ser-225, Asn-226, and Ser-268 each coordinate dimethylallyl diphosphate. Isopentenyl diphosphate-binding residues include Ser-224, Ser-225, Asn-226, and Ser-268.

The protein belongs to the IspH family. Requires [4Fe-4S] cluster as cofactor.

It carries out the reaction isopentenyl diphosphate + 2 oxidized [2Fe-2S]-[ferredoxin] + H2O = (2E)-4-hydroxy-3-methylbut-2-enyl diphosphate + 2 reduced [2Fe-2S]-[ferredoxin] + 2 H(+). The enzyme catalyses dimethylallyl diphosphate + 2 oxidized [2Fe-2S]-[ferredoxin] + H2O = (2E)-4-hydroxy-3-methylbut-2-enyl diphosphate + 2 reduced [2Fe-2S]-[ferredoxin] + 2 H(+). It participates in isoprenoid biosynthesis; dimethylallyl diphosphate biosynthesis; dimethylallyl diphosphate from (2E)-4-hydroxy-3-methylbutenyl diphosphate: step 1/1. The protein operates within isoprenoid biosynthesis; isopentenyl diphosphate biosynthesis via DXP pathway; isopentenyl diphosphate from 1-deoxy-D-xylulose 5-phosphate: step 6/6. Catalyzes the conversion of 1-hydroxy-2-methyl-2-(E)-butenyl 4-diphosphate (HMBPP) into a mixture of isopentenyl diphosphate (IPP) and dimethylallyl diphosphate (DMAPP). Acts in the terminal step of the DOXP/MEP pathway for isoprenoid precursor biosynthesis. This chain is 4-hydroxy-3-methylbut-2-enyl diphosphate reductase, found in Vesicomyosocius okutanii subsp. Calyptogena okutanii (strain HA).